The sequence spans 254 residues: Kallikrein-4 (254 aa).

Positions 1–26 (MATAGNPWGWFLGYLILGVAGSLVSG) are cleaved as a signal peptide. A propeptide spanning residues 27–30 (SCSQ) is cleaved from the precursor. Residues 31 to 252 (IINGEDCSPH…FTEWIEKTVQ (222 aa)) form the Peptidase S1 domain. Disulfide bonds link cysteine 37–cysteine 167, cysteine 56–cysteine 72, cysteine 141–cysteine 241, cysteine 148–cysteine 213, cysteine 178–cysteine 192, and cysteine 203–cysteine 228. Histidine 40 lines the Zn(2+) pocket. Residue histidine 71 is the Charge relay system of the active site. Glutamate 91 is a binding site for Zn(2+). Catalysis depends on aspartate 116, which acts as the Charge relay system. Asparagine 169 is a glycosylation site (N-linked (GlcNAc...) asparagine). Serine 207 (charge relay system) is an active-site residue.

This sequence belongs to the peptidase S1 family. Kallikrein subfamily. Post-translationally, N-glycosylated. The N-glycan structures are of complex diantennary or triantennary type, which may be further modified with up to 2 sialic acid residues. As to expression, expressed in prostate.

Its subcellular location is the secreted. Functionally, has a major role in enamel formation. Required during the maturation stage of tooth development for clearance of enamel proteins and normal structural patterning of the crystalline matrix. The sequence is that of Kallikrein-4 (KLK4) from Homo sapiens (Human).